Consider the following 136-residue polypeptide: Ribonuclease P protein component (136 aa).

This sequence belongs to the RnpA family. As to quaternary structure, consists of a catalytic RNA component (M1 or rnpB) and a protein subunit.

The catalysed reaction is Endonucleolytic cleavage of RNA, removing 5'-extranucleotides from tRNA precursor.. Its function is as follows. RNaseP catalyzes the removal of the 5'-leader sequence from pre-tRNA to produce the mature 5'-terminus. It can also cleave other RNA substrates such as 4.5S RNA. The protein component plays an auxiliary but essential role in vivo by binding to the 5'-leader sequence and broadening the substrate specificity of the ribozyme. The protein is Ribonuclease P protein component of Burkholderia mallei (strain NCTC 10247).